The following is a 294-amino-acid chain: ATP synthase gamma chain (294 aa).

It belongs to the ATPase gamma chain family. F-type ATPases have 2 components, CF(1) - the catalytic core - and CF(0) - the membrane proton channel. CF(1) has five subunits: alpha(3), beta(3), gamma(1), delta(1), epsilon(1). CF(0) has three main subunits: a, b and c.

It is found in the cell inner membrane. In terms of biological role, produces ATP from ADP in the presence of a proton gradient across the membrane. The gamma chain is believed to be important in regulating ATPase activity and the flow of protons through the CF(0) complex. In Nitrosomonas europaea (strain ATCC 19718 / CIP 103999 / KCTC 2705 / NBRC 14298), this protein is ATP synthase gamma chain.